A 421-amino-acid polypeptide reads, in one-letter code: Forkhead box protein fkh-3 (421 aa).

The segment at residues 118 to 218 (RPPISYVALC…SDADFDFFRK (101 aa)) is a DNA-binding region (fork-head).

It is found in the nucleus. In terms of biological role, transcription factor. Binds to DNA sequence motif 5'-CTGTTTCA-3'. Regulates expression of a class of small RNAs, known as 21U-RNAs, perhaps acting redundantly with fkh-4 and fkh-5. In Caenorhabditis elegans, this protein is Forkhead box protein fkh-3.